A 304-amino-acid chain; its full sequence is Acetaldehyde dehydrogenase 1 (304 aa).

Residue 11 to 14 participates in NAD(+) binding; sequence SGNI. The active-site Acyl-thioester intermediate is the C130. Residues 161–169 and N272 contribute to the NAD(+) site; that span reads SVGPGTRAN.

It belongs to the acetaldehyde dehydrogenase family.

It carries out the reaction acetaldehyde + NAD(+) + CoA = acetyl-CoA + NADH + H(+). This Azoarcus sp. (strain BH72) protein is Acetaldehyde dehydrogenase 1 (lapF).